A 58-amino-acid chain; its full sequence is Short neurotoxin MS11 (58 aa).

Intrachain disulfides connect cysteine 3–cysteine 20, cysteine 13–cysteine 38, cysteine 42–cysteine 50, and cysteine 51–cysteine 56.

The protein belongs to the three-finger toxin family. Short-chain subfamily. In terms of tissue distribution, expressed by the venom gland.

It localises to the secreted. Functionally, produces peripheral paralysis by blocking neuromuscular transmission at the postsynaptic site. Binds to and inhibits the endogenous nicotinic acetylcholine receptors (nAChR) in the human rhabdomyosarcoma TE 671 cell line with an IC(50) of 266 mM. Not toxic to mice by intraperitoneal injection or to zebrafish by injection at the back dorsolateral region. The polypeptide is Short neurotoxin MS11 (Micrurus surinamensis (Surinam coral snake)).